Here is a 265-residue protein sequence, read N- to C-terminus: MNAPIGVIDSGVGGLTVAKEIIKRLPNETIYYIGDTARCPYGPRSRQEVRNFTWQMAKALEKMNIKMLVIACNTATAVALESLQRNMPFPVLGVINAGARAAVKKTKRHEVVVLATEGTIKSGAYEEALLSLNTSTHIIPLACPTFVPLVESGEYKGEFATKLIAEGLKPLKNQQFDTVILGCTHYPILQKQIEAVVGEEVNVLSSAEETAKDAQEMLAYNGTLANANTVPAHKFFATGSVPIFRSIAENWLEQGTLDIRRITLK.

Substrate contacts are provided by residues 9–10 and 41–42; these read DS and YG. Residue cysteine 72 is the Proton donor/acceptor of the active site. Residue 73 to 74 participates in substrate binding; that stretch reads NT. The active-site Proton donor/acceptor is the cysteine 183. 184–185 contacts substrate; that stretch reads TH.

It belongs to the aspartate/glutamate racemases family.

The catalysed reaction is L-glutamate = D-glutamate. It participates in cell wall biogenesis; peptidoglycan biosynthesis. Provides the (R)-glutamate required for cell wall biosynthesis. In Lysinibacillus sphaericus (strain C3-41), this protein is Glutamate racemase.